We begin with the raw amino-acid sequence, 241 residues long: MORN repeat-containing protein 3 (241 aa).

Residues 6–35 (CPRKVEPPWKGWDRKAQKNGLRHQVFAVNG) are interaction with MDM2. 7 MORN repeats span residues 38-60 (YVGE…KSGA), 62-84 (YEGD…DPET), 91-113 (YSGW…PKEY), 114-136 (YEGE…NGDI), 137-159 (YEGQ…NGNR), 160-182 (YEGI…DHGQ), and 184-205 (FEGY…GRDE). The segment at 76–100 (SLSHPDPETGKLRRVYSGWWKGDKK) is interaction with SIRT1. Positions 206-240 (APEPTQFPIPKVEILDPDGVLKEALDKLMKPEEEE) are interaction with TP53.

Interacts with MEIG1. Interacts with TP53, MDM2 and SIRT1; the interactions mediate post-transcriptional modifications of TP53 by MDM2 and SIRT1. Expressed in testis (at protein level).

It localises to the cytoplasmic vesicle. It is found in the secretory vesicle. The protein resides in the acrosome. Functionally, assembles a suppression complex (suppresome) by tethering SIRT1 and MDM2 to regulate composite modifications of p53/TP53. Confers both deacetylation-mediated functional inactivation, by SIRT1, and ubiquitination-dependent degradation, by MDM2, of p53/TP53, promoting a proliferative and cell survival behaviors. May play a role in the regulation of spermatogenesis. The chain is MORN repeat-containing protein 3 (Morn3) from Mus musculus (Mouse).